The primary structure comprises 208 residues: Outer-membrane lipoprotein carrier protein (208 aa).

The N-terminal stretch at 1-22 is a signal peptide; that stretch reads MLKPLSQLVCALPLVVAASSYA.

It belongs to the LolA family. In terms of assembly, monomer.

It localises to the periplasm. In terms of biological role, participates in the translocation of lipoproteins from the inner membrane to the outer membrane. Only forms a complex with a lipoprotein if the residue after the N-terminal Cys is not an aspartate (The Asp acts as a targeting signal to indicate that the lipoprotein should stay in the inner membrane). The polypeptide is Outer-membrane lipoprotein carrier protein (Shewanella loihica (strain ATCC BAA-1088 / PV-4)).